A 349-amino-acid chain; its full sequence is 4-hydroxythreonine-4-phosphate dehydrogenase (349 aa).

The substrate site is built by H141 and T142. Residues H176, H221, and H276 each contribute to the a divalent metal cation site. Positions 284, 293, and 302 each coordinate substrate.

It belongs to the PdxA family. In terms of assembly, homodimer. The cofactor is Zn(2+). Mg(2+) serves as cofactor. Requires Co(2+) as cofactor.

The protein resides in the cytoplasm. It carries out the reaction 4-(phosphooxy)-L-threonine + NAD(+) = 3-amino-2-oxopropyl phosphate + CO2 + NADH. It participates in cofactor biosynthesis; pyridoxine 5'-phosphate biosynthesis; pyridoxine 5'-phosphate from D-erythrose 4-phosphate: step 4/5. In terms of biological role, catalyzes the NAD(P)-dependent oxidation of 4-(phosphooxy)-L-threonine (HTP) into 2-amino-3-oxo-4-(phosphooxy)butyric acid which spontaneously decarboxylates to form 3-amino-2-oxopropyl phosphate (AHAP). The polypeptide is 4-hydroxythreonine-4-phosphate dehydrogenase (Methylorubrum populi (strain ATCC BAA-705 / NCIMB 13946 / BJ001) (Methylobacterium populi)).